The sequence spans 336 residues: Ketol-acid reductoisomerase (NADP(+)) (336 aa).

The region spanning 1–181 (MNVYYDKDCN…GGGRTGIIET (181 aa)) is the KARI N-terminal Rossmann domain. Residues 24 to 27 (YGSQ), Arg47, Ser50, Ser52, and 82 to 85 (DEFQ) contribute to the NADP(+) site. His107 is a catalytic residue. Gly133 contributes to the NADP(+) binding site. In terms of domain architecture, KARI C-terminal knotted spans 182-327 (TFQDETETDL…GKLRSMMPWI (146 aa)). Positions 190, 194, 226, and 230 each coordinate Mg(2+). Residue Ser251 participates in substrate binding.

The protein belongs to the ketol-acid reductoisomerase family. The cofactor is Mg(2+).

It catalyses the reaction (2R)-2,3-dihydroxy-3-methylbutanoate + NADP(+) = (2S)-2-acetolactate + NADPH + H(+). It carries out the reaction (2R,3R)-2,3-dihydroxy-3-methylpentanoate + NADP(+) = (S)-2-ethyl-2-hydroxy-3-oxobutanoate + NADPH + H(+). Its pathway is amino-acid biosynthesis; L-isoleucine biosynthesis; L-isoleucine from 2-oxobutanoate: step 2/4. It participates in amino-acid biosynthesis; L-valine biosynthesis; L-valine from pyruvate: step 2/4. Involved in the biosynthesis of branched-chain amino acids (BCAA). Catalyzes an alkyl-migration followed by a ketol-acid reduction of (S)-2-acetolactate (S2AL) to yield (R)-2,3-dihydroxy-isovalerate. In the isomerase reaction, S2AL is rearranged via a Mg-dependent methyl migration to produce 3-hydroxy-3-methyl-2-ketobutyrate (HMKB). In the reductase reaction, this 2-ketoacid undergoes a metal-dependent reduction by NADPH to yield (R)-2,3-dihydroxy-isovalerate. This chain is Ketol-acid reductoisomerase (NADP(+)), found in Geotalea daltonii (strain DSM 22248 / JCM 15807 / FRC-32) (Geobacter daltonii).